The chain runs to 212 residues: Pyridoxine/pyridoxamine 5'-phosphate oxidase (212 aa).

Substrate is bound by residues 8-11 (RTDY) and K66. Residues 61 to 66 (RIVLLK), 76 to 77 (FT), K83, and Q105 each bind FMN. Substrate-binding residues include Y123, R127, and S131. FMN is bound by residues 140–141 (QS) and W184. 190-192 (RLH) contacts substrate. Residue R194 participates in FMN binding.

The protein belongs to the pyridoxamine 5'-phosphate oxidase family. Homodimer. It depends on FMN as a cofactor.

The enzyme catalyses pyridoxamine 5'-phosphate + O2 + H2O = pyridoxal 5'-phosphate + H2O2 + NH4(+). It carries out the reaction pyridoxine 5'-phosphate + O2 = pyridoxal 5'-phosphate + H2O2. Its pathway is cofactor metabolism; pyridoxal 5'-phosphate salvage; pyridoxal 5'-phosphate from pyridoxamine 5'-phosphate: step 1/1. It participates in cofactor metabolism; pyridoxal 5'-phosphate salvage; pyridoxal 5'-phosphate from pyridoxine 5'-phosphate: step 1/1. Functionally, catalyzes the oxidation of either pyridoxine 5'-phosphate (PNP) or pyridoxamine 5'-phosphate (PMP) into pyridoxal 5'-phosphate (PLP). This Ralstonia pickettii (strain 12J) protein is Pyridoxine/pyridoxamine 5'-phosphate oxidase.